Consider the following 145-residue polypeptide: D-aminoacyl-tRNA deacylase (145 aa).

The Gly-cisPro motif, important for rejection of L-amino acids signature appears at 137–138; sequence GP.

The protein belongs to the DTD family. In terms of assembly, homodimer.

The protein localises to the cytoplasm. The enzyme catalyses glycyl-tRNA(Ala) + H2O = tRNA(Ala) + glycine + H(+). It catalyses the reaction a D-aminoacyl-tRNA + H2O = a tRNA + a D-alpha-amino acid + H(+). Functionally, an aminoacyl-tRNA editing enzyme that deacylates mischarged D-aminoacyl-tRNAs. Also deacylates mischarged glycyl-tRNA(Ala), protecting cells against glycine mischarging by AlaRS. Acts via tRNA-based rather than protein-based catalysis; rejects L-amino acids rather than detecting D-amino acids in the active site. By recycling D-aminoacyl-tRNA to D-amino acids and free tRNA molecules, this enzyme counteracts the toxicity associated with the formation of D-aminoacyl-tRNA entities in vivo and helps enforce protein L-homochirality. The chain is D-aminoacyl-tRNA deacylase from Serratia proteamaculans (strain 568).